A 376-amino-acid chain; its full sequence is UPF0754 membrane protein SERP1382 (376 aa).

A run of 2 helical transmembrane segments spans residues 4–24 (ILLV…TNMI) and 356–376 (TLGF…AIFV).

This sequence belongs to the UPF0754 family.

It localises to the cell membrane. In Staphylococcus epidermidis (strain ATCC 35984 / DSM 28319 / BCRC 17069 / CCUG 31568 / BM 3577 / RP62A), this protein is UPF0754 membrane protein SERP1382.